The sequence spans 394 residues: Protein-glutamate methylesterase/protein-glutamine glutaminase 2 (394 aa).

Positions 4–121 constitute a Response regulatory domain; it reads KVLVVDDSSF…ARNRDEAISL (118 aa). Asp55 bears the 4-aspartylphosphate mark. The 193-residue stretch at 202-394 folds into the CheB-type methylesterase domain; the sequence is SGKKYQLMAI…AERILVEVGR (193 aa). Residues Ser214, His241, and Asp337 contribute to the active site.

It belongs to the CheB family. In terms of processing, phosphorylated by CheA. Phosphorylation of the N-terminal regulatory domain activates the methylesterase activity.

The protein localises to the cytoplasm. It catalyses the reaction [protein]-L-glutamate 5-O-methyl ester + H2O = L-glutamyl-[protein] + methanol + H(+). The catalysed reaction is L-glutaminyl-[protein] + H2O = L-glutamyl-[protein] + NH4(+). Functionally, involved in chemotaxis. Part of a chemotaxis signal transduction system that modulates chemotaxis in response to various stimuli. Catalyzes the demethylation of specific methylglutamate residues introduced into the chemoreceptors (methyl-accepting chemotaxis proteins or MCP) by CheR. Also mediates the irreversible deamidation of specific glutamine residues to glutamic acid. In Photobacterium profundum (strain SS9), this protein is Protein-glutamate methylesterase/protein-glutamine glutaminase 2.